The sequence spans 1385 residues: Serine-aspartate repeat-containing protein D (1385 aa).

The N-terminal stretch at 1 to 35 (MLNRENKTAITRKGMVSNRLNKFSIRKYTVGTASI) is a signal peptide. The YSIRK-G/S signaling motif motif lies at 23-34 (FSIRKYTVGTAS). Residues 36–568 (LVGTTLIFGL…NNQSGGAGQE (533 aa)) are ligand binding A region. Disordered regions lie at residues 54–162 (ESTN…DLLE) and 200–224 (ETLV…KSTA). Composition is skewed to polar residues over residues 62–71 (EATTSASDNQ) and 94–109 (EMVS…NGNK). Positions 130–145 (KSDEQASPKSTNEDLN) are enriched in basic and acidic residues. A compositionally biased stretch (polar residues) spans 146–155 (TKQTISNQEG). Residues 205 to 214 (NNSNSNNENN) are compositionally biased toward low complexity. CNA-B domains are found at residues 569–680 (VYKI…IYKP), 681–791 (KYNL…YKTP), 792–901 (KYNL…FYKP), 902–1012 (TYNL…YKTP), and 1013–1123 (KYSL…EEET). 3 disordered regions span residues 856–886 (FETP…TGVI), 972–992 (YTPT…GLTT), and 1077–1361 (FEKP…SNNA). 2 stretches are compositionally biased toward polar residues: residues 860-869 (SGYTPTQVGS) and 972-981 (YTPTSVTSGN). The span at 1081–1090 (TGLTQTGTNT) shows a compositional bias: low complexity. Composition is skewed to acidic residues over residues 1091–1101 (TEDDKDADGGE) and 1118–1324 (YYEE…DSDS). The LPXTG sorting signal motif lies at 1348–1352 (LPETG). Threonine 1351 carries the pentaglycyl murein peptidoglycan amidated threonine modification. A propeptide spans 1352–1385 (GNENSGSNNATLFGGLFAALGSLLLFGRRKKQNK) (removed by sortase).

The protein belongs to the serine-aspartate repeat-containing protein (SDr) family. Interacts with host DSG1; this interaction increases S.aureus adherence to keratinocytes.

It is found in the secreted. The protein resides in the cell wall. Cell surface-associated calcium-binding protein which plays an important role in adhesion and pathogenesis. Mediates interactions with components of the extracellular matrix such as host DSG1 to promote bacterial adhesion to host cells. Contributes to the resistance to killing by innate immune components such as neutrophils present in blood and thus attenuates bacterial clearance. This is Serine-aspartate repeat-containing protein D (sdrD) from Staphylococcus aureus (strain Mu50 / ATCC 700699).